A 344-amino-acid chain; its full sequence is UDP-N-acetylenolpyruvoylglucosamine reductase (344 aa).

One can recognise an FAD-binding PCMH-type domain in the interval 17-187; the sequence is VDYACSELIS…TGVGIKLAKK (171 aa). Residue R163 is part of the active site. Residue S233 is the Proton donor of the active site. The active site involves E329.

The protein belongs to the MurB family. FAD is required as a cofactor.

It localises to the cytoplasm. It catalyses the reaction UDP-N-acetyl-alpha-D-muramate + NADP(+) = UDP-N-acetyl-3-O-(1-carboxyvinyl)-alpha-D-glucosamine + NADPH + H(+). Its pathway is cell wall biogenesis; peptidoglycan biosynthesis. In terms of biological role, cell wall formation. This is UDP-N-acetylenolpyruvoylglucosamine reductase from Shewanella sediminis (strain HAW-EB3).